Here is a 334-residue protein sequence, read N- to C-terminus: Holliday junction branch migration complex subunit RuvB (334 aa).

The tract at residues 1–181 (MHDRLISGTE…FGIVQRLEFY (181 aa)) is large ATPase domain (RuvB-L). Residues isoleucine 20, arginine 21, glycine 62, lysine 65, threonine 66, threonine 67, 128–130 (EDY), arginine 171, tyrosine 181, and arginine 218 contribute to the ATP site. Position 66 (threonine 66) interacts with Mg(2+). Residues 182–252 (SVEDLTHIVT…MAQRALDMLN (71 aa)) are small ATPAse domain (RuvB-S). Residues 255 to 334 (KDGLDTLDRR…FGLTPPEPKN (80 aa)) form a head domain (RuvB-H) region. Residues arginine 310 and arginine 315 each contribute to the DNA site.

This sequence belongs to the RuvB family. Homohexamer. Forms an RuvA(8)-RuvB(12)-Holliday junction (HJ) complex. HJ DNA is sandwiched between 2 RuvA tetramers; dsDNA enters through RuvA and exits via RuvB. An RuvB hexamer assembles on each DNA strand where it exits the tetramer. Each RuvB hexamer is contacted by two RuvA subunits (via domain III) on 2 adjacent RuvB subunits; this complex drives branch migration. In the full resolvosome a probable DNA-RuvA(4)-RuvB(12)-RuvC(2) complex forms which resolves the HJ.

It is found in the cytoplasm. It catalyses the reaction ATP + H2O = ADP + phosphate + H(+). In terms of biological role, the RuvA-RuvB-RuvC complex processes Holliday junction (HJ) DNA during genetic recombination and DNA repair, while the RuvA-RuvB complex plays an important role in the rescue of blocked DNA replication forks via replication fork reversal (RFR). RuvA specifically binds to HJ cruciform DNA, conferring on it an open structure. The RuvB hexamer acts as an ATP-dependent pump, pulling dsDNA into and through the RuvAB complex. RuvB forms 2 homohexamers on either side of HJ DNA bound by 1 or 2 RuvA tetramers; 4 subunits per hexamer contact DNA at a time. Coordinated motions by a converter formed by DNA-disengaged RuvB subunits stimulates ATP hydrolysis and nucleotide exchange. Immobilization of the converter enables RuvB to convert the ATP-contained energy into a lever motion, pulling 2 nucleotides of DNA out of the RuvA tetramer per ATP hydrolyzed, thus driving DNA branch migration. The RuvB motors rotate together with the DNA substrate, which together with the progressing nucleotide cycle form the mechanistic basis for DNA recombination by continuous HJ branch migration. Branch migration allows RuvC to scan DNA until it finds its consensus sequence, where it cleaves and resolves cruciform DNA. The polypeptide is Holliday junction branch migration complex subunit RuvB (Acinetobacter baylyi (strain ATCC 33305 / BD413 / ADP1)).